The chain runs to 887 residues: Alanine--tRNA ligase (887 aa).

The Zn(2+) site is built by His575, His579, Cys677, and His681.

It belongs to the class-II aminoacyl-tRNA synthetase family. Zn(2+) is required as a cofactor.

Its subcellular location is the cytoplasm. It catalyses the reaction tRNA(Ala) + L-alanine + ATP = L-alanyl-tRNA(Ala) + AMP + diphosphate. In terms of biological role, catalyzes the attachment of alanine to tRNA(Ala) in a two-step reaction: alanine is first activated by ATP to form Ala-AMP and then transferred to the acceptor end of tRNA(Ala). Also edits incorrectly charged Ser-tRNA(Ala) and Gly-tRNA(Ala) via its editing domain. The sequence is that of Alanine--tRNA ligase from Geobacillus kaustophilus (strain HTA426).